We begin with the raw amino-acid sequence, 160 residues long: Large ribosomal subunit protein eL21A (160 aa).

Positions 114 to 138 (AKRKEAKAQGKTVQLRRQPAPPAKA) are disordered.

The protein belongs to the eukaryotic ribosomal protein eL21 family. Component of the large ribosomal subunit (LSU). Mature yeast ribosomes consist of a small (40S) and a large (60S) subunit. The 40S small subunit contains 1 molecule of ribosomal RNA (18S rRNA) and at least 33 different proteins. The large 60S subunit contains 3 rRNA molecules (25S, 5.8S and 5S rRNA) and at least 46 different proteins.

The protein resides in the cytoplasm. Component of the ribosome, a large ribonucleoprotein complex responsible for the synthesis of proteins in the cell. The small ribosomal subunit (SSU) binds messenger RNAs (mRNAs) and translates the encoded message by selecting cognate aminoacyl-transfer RNA (tRNA) molecules. The large subunit (LSU) contains the ribosomal catalytic site termed the peptidyl transferase center (PTC), which catalyzes the formation of peptide bonds, thereby polymerizing the amino acids delivered by tRNAs into a polypeptide chain. The nascent polypeptides leave the ribosome through a tunnel in the LSU and interact with protein factors that function in enzymatic processing, targeting, and the membrane insertion of nascent chains at the exit of the ribosomal tunnel. The chain is Large ribosomal subunit protein eL21A (rpl2101) from Schizosaccharomyces pombe (strain 972 / ATCC 24843) (Fission yeast).